Consider the following 693-residue polypeptide: Protein FAM13A (693 aa).

A Phosphoserine modification is found at Ser-19. 2 disordered regions span residues 56-89 (SNAGDQSSEDSEPGPSSASSIPTRQRGHQFKKQD) and 136-233 (RSKP…VPDM). Over residues 69-78 (GPSSASSIPT) the composition is skewed to polar residues. The span at 159-171 (LSMESLSSMQSQE) shows a compositional bias: low complexity. Basic and acidic residues predominate over residues 184-197 (ESKEIERGGRDTQH). Phosphoserine occurs at positions 267 and 287. Disordered stretches follow at residues 302–331 (DTEVPPSPPNSHSFMRRRSSSLGSYDDEQE) and 396–424 (ISEEDLTPRTRQRSNTLPKSFGSQLEKED). Position 397 is a phosphoserine (Ser-397). At Thr-402 the chain carries Phosphothreonine. Positions 408-418 (RSNTLPKSFGS) are enriched in polar residues.

The protein belongs to the FAM13 family. In terms of assembly, interacts with ANXA2. Expressed in the mammary gland, with similar levels at all stages of development, including pregnancy, lactation and involution.

Functionally, (Microbial infection) Plays a role in the clearance of Pseudomonas aeruginosa by macrophages. In complex with ANXA2, promotes activation of Rho GTPases following P.aeruginosa infection. The polypeptide is Protein FAM13A (Fam13a) (Mus musculus (Mouse)).